Consider the following 93-residue polypeptide: Small ribosomal subunit protein uS19c (93 aa).

It belongs to the universal ribosomal protein uS19 family.

The protein localises to the plastid. It localises to the chloroplast. Protein S19 forms a complex with S13 that binds strongly to the 16S ribosomal RNA. The sequence is that of Small ribosomal subunit protein uS19c from Tetradesmus obliquus (Green alga).